The primary structure comprises 248 residues: Triosephosphate isomerase (248 aa).

9-11 contributes to the substrate binding site; the sequence is NWK. H94 serves as the catalytic Electrophile. E166 functions as the Proton acceptor in the catalytic mechanism. Substrate is bound by residues G172, S212, and 233–234; that span reads GG.

It belongs to the triosephosphate isomerase family. Homodimer.

The protein localises to the cytoplasm. It carries out the reaction D-glyceraldehyde 3-phosphate = dihydroxyacetone phosphate. It functions in the pathway carbohydrate biosynthesis; gluconeogenesis. It participates in carbohydrate degradation; glycolysis; D-glyceraldehyde 3-phosphate from glycerone phosphate: step 1/1. Its function is as follows. Involved in the gluconeogenesis. Catalyzes stereospecifically the conversion of dihydroxyacetone phosphate (DHAP) to D-glyceraldehyde-3-phosphate (G3P). This chain is Triosephosphate isomerase, found in Clostridium botulinum (strain ATCC 19397 / Type A).